Reading from the N-terminus, the 452-residue chain is tRNA modification GTPase MnmE (452 aa).

Positions 23, 81, and 120 each coordinate (6S)-5-formyl-5,6,7,8-tetrahydrofolate. The TrmE-type G domain occupies 217–373; it reads GIKTAIIGQT…LVLRINQMYL (157 aa). Asn227 contacts K(+). GTP-binding positions include 227 to 232, 246 to 252, and 271 to 274; these read NVGKSS, TDIPGTT, and DTAG. Ser231 lines the Mg(2+) pocket. K(+) contacts are provided by Thr246, Ile248, and Thr251. Mg(2+) is bound at residue Thr252. Lys452 provides a ligand contact to (6S)-5-formyl-5,6,7,8-tetrahydrofolate.

Belongs to the TRAFAC class TrmE-Era-EngA-EngB-Septin-like GTPase superfamily. TrmE GTPase family. Homodimer. Heterotetramer of two MnmE and two MnmG subunits. K(+) serves as cofactor.

Its subcellular location is the cytoplasm. In terms of biological role, exhibits a very high intrinsic GTPase hydrolysis rate. Involved in the addition of a carboxymethylaminomethyl (cmnm) group at the wobble position (U34) of certain tRNAs, forming tRNA-cmnm(5)s(2)U34. In Mycoplasma mycoides subsp. mycoides SC (strain CCUG 32753 / NCTC 10114 / PG1), this protein is tRNA modification GTPase MnmE.